Reading from the N-terminus, the 291-residue chain is Probable peptide ABC transporter permease protein y4tQ (291 aa).

A run of 5 helical transmembrane segments spans residues 28–48 (LVLL…AAPL), 92–112 (LIVG…IGVI), 137–157 (LLAI…IVAI), 213–233 (ATVC…GVGV), and 249–269 (LFLA…AVTV). The ABC transmembrane type-1 domain occupies 88 to 276 (ARISLIVGLL…VTVLAVNLLG (189 aa)).

This sequence belongs to the binding-protein-dependent transport system permease family. OppBC subfamily.

It is found in the cell inner membrane. Probably part of the binding-protein-dependent transport system y4tOPQRS for a peptide. Probably responsible for the translocation of the substrate across the membrane. This Sinorhizobium fredii (strain NBRC 101917 / NGR234) protein is Probable peptide ABC transporter permease protein y4tQ.